Reading from the N-terminus, the 357-residue chain is MSAPTTAIDALLAEHADLERQLADPALHADAGKARKAGRRFAQLAPIVATYRKLEAARGDLEAARELGADDASFAAEVPELEATVDQLETQLSDLLAPRDPHDADDIVLEVKSGEGGEESALFAADLARMYIRYAERHGWSVTILDETTSDLGGYKDATLSIRSKGDSADGVWSRLKFEGGVHRVQRVPVTESQGRVHTSAAGVLVYPEPEEVEQVQIDESDLRIDVYRSSGKGGQGVNTTDSAVRITHLPTGIVVTCQNERSQLQNKARAMQVLAARLQSLAEEQASADASADRASQIRTVDRSERIRTYNFPENRIADHRINFKAHNLDQVLDGDLDPLFDALAAADKQARLQSS.

An N5-methylglutamine modification is found at Q236.

This sequence belongs to the prokaryotic/mitochondrial release factor family. Methylated by PrmC. Methylation increases the termination efficiency of RF1.

It is found in the cytoplasm. Its function is as follows. Peptide chain release factor 1 directs the termination of translation in response to the peptide chain termination codons UAG and UAA. The protein is Peptide chain release factor 1 of Mycobacterium sp. (strain JLS).